The following is a 570-amino-acid chain: Urease subunit alpha (570 aa).

Positions 131–570 (GGFDSHIHFI…LPLAQRYFMF (440 aa)) constitute a Urease domain. Residues H136, H138, and K219 each contribute to the Ni(2+) site. K219 is modified (N6-carboxylysine). Residue H221 participates in substrate binding. H248 and H274 together coordinate Ni(2+). The active-site Proton donor is H322. A Ni(2+)-binding site is contributed by D362.

Belongs to the metallo-dependent hydrolases superfamily. Urease alpha subunit family. As to quaternary structure, heterotrimer of UreA (gamma), UreB (beta) and UreC (alpha) subunits. Three heterotrimers associate to form the active enzyme. Requires Ni cation as cofactor. Carboxylation allows a single lysine to coordinate two nickel ions.

It localises to the cytoplasm. The enzyme catalyses urea + 2 H2O + H(+) = hydrogencarbonate + 2 NH4(+). Its pathway is nitrogen metabolism; urea degradation; CO(2) and NH(3) from urea (urease route): step 1/1. This chain is Urease subunit alpha, found in Rhodopseudomonas palustris (strain ATCC BAA-98 / CGA009).